Here is a 375-residue protein sequence, read N- to C-terminus: Amylovoran biosynthesis protein AmsC (375 aa).

A run of 9 helical transmembrane segments spans residues 2–22 (AIYWIVSYSILVFCFFELAMI), 31–51 (KILINYFFLIGVFALILFAGI), 93–113 (MVLAWVASCFTHESYFFLLFI), 162–182 (IAFICSLVARNYLLALLFIVL), 208–228 (LPLVLVIASIPLGIIGGKKLF), 256–276 (VFGLANLKNIAFIGAFTLYYF), 287–307 (VYILLIAYSIGAAVRITFSDF), 309–329 (IFGGRVGNLFLHTEPLLFAFL), and 337–357 (LLNFFMLFSITTYYLAYNTIL).

It is found in the cell membrane. Its pathway is glycan metabolism; exopolysaccharide biosynthesis. Its function is as follows. Involved in the biosynthesis of amylovoran which functions as a virulence factor. This Erwinia amylovora (Fire blight bacteria) protein is Amylovoran biosynthesis protein AmsC (amsC).